The chain runs to 461 residues: Tol-Pal system protein TolB 2 (461 aa).

The N-terminal stretch at 1-20 (MKIRHLLLLAGLVSAPAIVA) is a signal peptide. Residues 28–47 (SSSAAQASGDDDGGLTGSVS) are disordered.

Belongs to the TolB family. In terms of assembly, the Tol-Pal system is composed of five core proteins: the inner membrane proteins TolA, TolQ and TolR, the periplasmic protein TolB and the outer membrane protein Pal. They form a network linking the inner and outer membranes and the peptidoglycan layer.

It localises to the periplasm. Part of the Tol-Pal system, which plays a role in outer membrane invagination during cell division and is important for maintaining outer membrane integrity. The chain is Tol-Pal system protein TolB 2 from Novosphingobium aromaticivorans (strain ATCC 700278 / DSM 12444 / CCUG 56034 / CIP 105152 / NBRC 16084 / F199).